The chain runs to 327 residues: Annexin A8 (327 aa).

Annexin repeat units follow at residues 21–92, 93–164, 177–249, and 253–324; these read FNPD…ALMY, PPYS…CLLQ, GLVL…TVVK, and NVHS…NLVG. Ca(2+) is bound by residues methionine 266, glycine 268, glycine 270, and aspartate 310.

The protein belongs to the annexin family.

Its function is as follows. This protein is an anticoagulant protein that acts as an indirect inhibitor of the thromboplastin-specific complex, which is involved in the blood coagulation cascade. This Mus musculus (Mouse) protein is Annexin A8 (Anxa8).